We begin with the raw amino-acid sequence, 137 residues long: Fructose-bisphosphate aldolase C (137 aa).

Lys-3 (schiff-base intermediate with dihydroxyacetone-P) is an active-site residue.

This sequence belongs to the class I fructose-bisphosphate aldolase family. In terms of assembly, homotetramer.

It carries out the reaction beta-D-fructose 1,6-bisphosphate = D-glyceraldehyde 3-phosphate + dihydroxyacetone phosphate. It participates in carbohydrate degradation; glycolysis; D-glyceraldehyde 3-phosphate and glycerone phosphate from D-glucose: step 4/4. This is Fructose-bisphosphate aldolase C (ALDOC) from Gallus gallus (Chicken).